The following is a 157-amino-acid chain: NADPH-dependent 7-cyano-7-deazaguanine reductase (157 aa).

Residue Cys56 is the Thioimide intermediate of the active site. Asp63 serves as the catalytic Proton donor. Residues Val78 to Ser80 and His97 to Glu98 each bind substrate.

This sequence belongs to the GTP cyclohydrolase I family. QueF type 1 subfamily.

It is found in the cytoplasm. It catalyses the reaction 7-aminomethyl-7-carbaguanine + 2 NADP(+) = 7-cyano-7-deazaguanine + 2 NADPH + 3 H(+). The protein operates within tRNA modification; tRNA-queuosine biosynthesis. Its function is as follows. Catalyzes the NADPH-dependent reduction of 7-cyano-7-deazaguanine (preQ0) to 7-aminomethyl-7-deazaguanine (preQ1). The sequence is that of NADPH-dependent 7-cyano-7-deazaguanine reductase from Parabacteroides distasonis (strain ATCC 8503 / DSM 20701 / CIP 104284 / JCM 5825 / NCTC 11152).